Here is a 505-residue protein sequence, read N- to C-terminus: Phosphoglycerate kinase A (505 aa).

Residues Val32, Asp33, Phe34, Asn35, Arg48, Ser70, His71, Gly73, Arg74, Arg224, His260, and Arg261 each contribute to the (2R)-3-phosphoglycerate site. ADP is bound by residues Gly306 and Ala307. Gly306 provides a ligand contact to CDP. AMP contacts are provided by Ala307 and Lys308. Ala307 serves as a coordination point for ATP. Position 307 (Ala307) interacts with Mg(2+). Lys308 contributes to the (2R)-3-phosphoglycerate binding site. Residue Glu311 participates in CDP binding. Glu311 provides a ligand contact to Mg(2+). ADP-binding residues include Lys312 and Gly330. An AMP-binding site is contributed by Lys312. Lys312 contributes to the ATP binding site. Gly330 is a CDP binding site. AMP contacts are provided by Ala331 and Ala403. ATP-binding residues include Ala331 and Ala403. ADP is bound by residues Ala403 and Asn427. 2 residues coordinate CDP: Gly428 and Phe433. Phe433, Glu434, Glu466, and Ser467 together coordinate ADP. Glu434 contacts AMP. The ATP site is built by Glu434, Glu466, and Ser467. A Mg(2+)-binding site is contributed by Glu466.

Belongs to the phosphoglycerate kinase family. In terms of assembly, monomer. Mg(2+) is required as a cofactor.

It carries out the reaction (2R)-3-phosphoglycerate + ATP = (2R)-3-phospho-glyceroyl phosphate + ADP. The protein operates within carbohydrate degradation; glycolysis; pyruvate from D-glyceraldehyde 3-phosphate: step 2/5. The protein is Phosphoglycerate kinase A of Trypanosoma brucei brucei.